A 763-amino-acid chain; its full sequence is MALAHTLGFPRIGRDRELKKALEAYWKGELDQPGLLQVGRELRRQHWQLQKDAGIELLPVGDFAWYDQVLAHSLAFGVIPERFRPADGQPTLDTLFAMARGVAQGCCGGAHAQEMTKWFDTNYHYLVPEFTVDQAFSLSWTQLFEEVDEALALGHAVKPVLIGPLSYLWLGKAKGGEFDRLELLERLLPVYGEIFQGLAARGVEWVQIDEPILVLDLPQAWKNAFERAYNLIQREPLKKLVATYFGGLEDNLGLAAGLPVDGLHIDLVRAPGQYPTILDRLPAYKVLSLGLVNGRNVWRCDLEKALEVLAHAHERLGERLWVAPSCSLLHSPVDLCREDQLDEELQSWLAFAVQKCEEVAILARALVEPEAPEVRQAFEVSRRVEASRRRSTRIHKREVQARLAAVRPQDSRRASAFAERAVQQRARLELPAFPTTTIGSFPQTSAIRLARQSWKQGRLSQAEYTEAMHSEIRHAVQVQERLGLDVLVHGEAERNDMVEYFAEQLDGYAFTRFGWVQSYGSRCVKPAVIYGDLSRPRPMTVEWIRYAQSLTGKVMKGMLTGPVTMLMWSFPREDVSREVQARQLALALRDEVSDLEQAGIRIVQIDEAAFREGLPLRRADWPHYLEWATEAFRLCASGVRDETQIHTHMCYSEFNDVIESIAAMDADVITIETSRSDMELLEAFEAFAYPNEIGPGVYDIHSPRVPAVEDMVKLLSKAAERIPAARLWVNPDCGLKTRAWAETEAALANMVAAARQLRQANLA.

5-methyltetrahydropteroyltri-L-glutamate-binding positions include 16–19 (RELK) and Lys117. Residues 438–440 (IGS) and Glu491 each bind L-homocysteine. L-methionine-binding positions include 438-440 (IGS) and Glu491. 5-methyltetrahydropteroyltri-L-glutamate-binding positions include 522–523 (RC) and Trp568. Residue Asp606 participates in L-homocysteine binding. Asp606 contributes to the L-methionine binding site. Residue Glu612 participates in 5-methyltetrahydropteroyltri-L-glutamate binding. His648, Cys650, and Glu672 together coordinate Zn(2+). His701 (proton donor) is an active-site residue. Cys733 is a binding site for Zn(2+).

The protein belongs to the vitamin-B12 independent methionine synthase family. Requires Zn(2+) as cofactor.

It catalyses the reaction 5-methyltetrahydropteroyltri-L-glutamate + L-homocysteine = tetrahydropteroyltri-L-glutamate + L-methionine. Its pathway is amino-acid biosynthesis; L-methionine biosynthesis via de novo pathway; L-methionine from L-homocysteine (MetE route): step 1/1. Functionally, catalyzes the transfer of a methyl group from 5-methyltetrahydrofolate to homocysteine resulting in methionine formation. In Pseudomonas paraeruginosa (strain DSM 24068 / PA7) (Pseudomonas aeruginosa (strain PA7)), this protein is 5-methyltetrahydropteroyltriglutamate--homocysteine methyltransferase.